Reading from the N-terminus, the 383-residue chain is Probable tRNA sulfurtransferase (383 aa).

The THUMP domain maps to 58–158; the sequence is NEIIHILKMI…ENKSYVWFDK (101 aa). Residues 176-177, 201-202, Arg259, Gly281, and Gln290 each bind ATP; these read LL and TF.

Belongs to the ThiI family.

The protein resides in the cytoplasm. It carries out the reaction [ThiI sulfur-carrier protein]-S-sulfanyl-L-cysteine + a uridine in tRNA + 2 reduced [2Fe-2S]-[ferredoxin] + ATP + H(+) = [ThiI sulfur-carrier protein]-L-cysteine + a 4-thiouridine in tRNA + 2 oxidized [2Fe-2S]-[ferredoxin] + AMP + diphosphate. The enzyme catalyses [ThiS sulfur-carrier protein]-C-terminal Gly-Gly-AMP + S-sulfanyl-L-cysteinyl-[cysteine desulfurase] + AH2 = [ThiS sulfur-carrier protein]-C-terminal-Gly-aminoethanethioate + L-cysteinyl-[cysteine desulfurase] + A + AMP + 2 H(+). It participates in cofactor biosynthesis; thiamine diphosphate biosynthesis. In terms of biological role, catalyzes the ATP-dependent transfer of a sulfur to tRNA to produce 4-thiouridine in position 8 of tRNAs, which functions as a near-UV photosensor. Also catalyzes the transfer of sulfur to the sulfur carrier protein ThiS, forming ThiS-thiocarboxylate. This is a step in the synthesis of thiazole, in the thiamine biosynthesis pathway. The sulfur is donated as persulfide by IscS. This is Probable tRNA sulfurtransferase from Malacoplasma penetrans (strain HF-2) (Mycoplasma penetrans).